The chain runs to 132 residues: Small ribosomal subunit protein uS13 (132 aa).

Over residues 101-125 (RGLPVRGQRTKTNARTRKGPRKTVA) the composition is skewed to basic residues. The interval 101–132 (RGLPVRGQRTKTNARTRKGPRKTVANKKIETR) is disordered.

Belongs to the universal ribosomal protein uS13 family. Part of the 30S ribosomal subunit. Forms a loose heterodimer with protein S19. Forms two bridges to the 50S subunit in the 70S ribosome.

Functionally, located at the top of the head of the 30S subunit, it contacts several helices of the 16S rRNA. In the 70S ribosome it contacts the 23S rRNA (bridge B1a) and protein L5 of the 50S subunit (bridge B1b), connecting the 2 subunits; these bridges are implicated in subunit movement. Contacts the tRNAs in the A and P-sites. The polypeptide is Small ribosomal subunit protein uS13 (Ureaplasma parvum serovar 3 (strain ATCC 27815 / 27 / NCTC 11736)).